A 204-amino-acid polypeptide reads, in one-letter code: Large ribosomal subunit protein uL3c (204 aa).

Residues 126–155 (HNFTRGPMTHGSKNHREPGSIGQGSTPAKV) form a disordered region.

It belongs to the universal ribosomal protein uL3 family. As to quaternary structure, part of the 50S ribosomal subunit.

It is found in the plastid. The protein localises to the chloroplast. Functionally, one of the primary rRNA binding proteins, it binds directly near the 3'-end of the 23S rRNA, where it nucleates assembly of the 50S subunit. This chain is Large ribosomal subunit protein uL3c (rpl3), found in Guillardia theta (Cryptophyte).